The sequence spans 258 residues: Acyl-[acyl-carrier-protein]--UDP-N-acetylglucosamine O-acyltransferase (258 aa).

Belongs to the transferase hexapeptide repeat family. LpxA subfamily. As to quaternary structure, homotrimer.

It is found in the cytoplasm. The catalysed reaction is a (3R)-hydroxyacyl-[ACP] + UDP-N-acetyl-alpha-D-glucosamine = a UDP-3-O-[(3R)-3-hydroxyacyl]-N-acetyl-alpha-D-glucosamine + holo-[ACP]. Its pathway is glycolipid biosynthesis; lipid IV(A) biosynthesis; lipid IV(A) from (3R)-3-hydroxytetradecanoyl-[acyl-carrier-protein] and UDP-N-acetyl-alpha-D-glucosamine: step 1/6. Functionally, involved in the biosynthesis of lipid A, a phosphorylated glycolipid that anchors the lipopolysaccharide to the outer membrane of the cell. The protein is Acyl-[acyl-carrier-protein]--UDP-N-acetylglucosamine O-acyltransferase of Neisseria meningitidis serogroup C / serotype 2a (strain ATCC 700532 / DSM 15464 / FAM18).